A 26-amino-acid chain; its full sequence is Delta-hemolysin (26 aa).

Met1 bears the N-formylmethionine mark.

The protein belongs to the delta-lysin family.

The protein resides in the secreted. Its subcellular location is the host cell membrane. In terms of biological role, lyses erythrocytes and many other mammalian cells. This chain is Delta-hemolysin (hld), found in Staphylococcus aureus (strain MSSA476).